Consider the following 825-residue polypeptide: Protein SEY1 homolog 2 (825 aa).

The segment at 1–21 is disordered; it reads MDEVSPTKHFTSKPLLPTKTP. Residues 1–728 are Cytoplasmic-facing; it reads MDEVSPTKHF…EKENSEIKYQ (728 aa). Positions 83–305 constitute a GB1/RHD3-type G domain; sequence GMDYNAVGIL…FLPQYNKEIP (223 aa). 93–100 contributes to the GTP binding site; it reads GAQSSGKS. Residues 373-397 are a coiled coil; that stretch reads KVFTKQIDAALERYKEVTERYMETI. Residues 729–749 traverse the membrane as a helical segment; that stretch reads IPLYLIVLVVFFGFDEFIAIL. The Lumenal portion of the chain corresponds to 750–752; sequence TNP. Residues 753-773 traverse the membrane as a helical segment; that stretch reads LLFILTLIIGGGVYIGYKLNL. Topologically, residues 774-825 are cytoplasmic; sequence GGVAKNYIQYLLSMSLSSTMEYLRTIPFFTPLIDKVWPKDDNNTEETQEEIK.

Belongs to the TRAFAC class dynamin-like GTPase superfamily. GB1/RHD3 GTPase family. RHD3 subfamily.

It localises to the endoplasmic reticulum membrane. Its function is as follows. Probable GTP-binding protein that may be involved in cell development. The chain is Protein SEY1 homolog 2 from Entamoeba histolytica (strain ATCC 30459 / HM-1:IMSS / ABRM).